A 468-amino-acid polypeptide reads, in one-letter code: UDP-N-acetylmuramate--L-alanine ligase (468 aa).

Position 112-118 (112-118 (GTHGKTT)) interacts with ATP.

Belongs to the MurCDEF family.

It is found in the cytoplasm. It carries out the reaction UDP-N-acetyl-alpha-D-muramate + L-alanine + ATP = UDP-N-acetyl-alpha-D-muramoyl-L-alanine + ADP + phosphate + H(+). It functions in the pathway cell wall biogenesis; peptidoglycan biosynthesis. Cell wall formation. The polypeptide is UDP-N-acetylmuramate--L-alanine ligase (Neisseria meningitidis serogroup C (strain 053442)).